Reading from the N-terminus, the 780-residue chain is Cullin-5 (780 aa).

Ser34 is subject to Phosphoserine. Thr210 carries the post-translational modification Phosphothreonine. The 62-residue stretch at 711–772 (RILRTQEAII…HRYIRRDEAD (62 aa)) folds into the Cullin neddylation domain. A Glycyl lysine isopeptide (Lys-Gly) (interchain with G-Cter in NEDD8) cross-link involves residue Lys724.

Belongs to the cullin family. As to quaternary structure, component of multiple cullin-5-RING E3 ubiquitin-protein ligase complexes (ECS complexes, also named CRL5 complexes) formed of CUL5, Elongin BC (ELOB and ELOC), RNF7/RBX2 and a variable SOCS box domain-containing protein as substrate-specific recognition component. CUL5-containing ECS complexes specifically contain RNF7/RBX2, and not RBX1, as catalytic subunit. Component of the ECS(ASB2) complex with the substrate recognition component ASB2. Component of the ECS(ASB6) complex with the substrate recognition component ASB6. Component of the ECS(ASB7) complex with the substrate recognition component ASB7. Component of the ECS(ASB9) complex with the substrate recognition component ASB9. Component of the ECS(ASB11) complex with the substrate recognition component ASB11. Component of the ECS(ASB12) complex with the substrate recognition component ASB12. Component of the ECS(LRRC41) complex with the substrate recognition component LRRC41. Component of the ECS(SOCS1) complex with the substrate recognition component SOCS1. Component of the ECS(SOCS2) complex with the substrate recognition component SOCS2. Component of the ECS(WSB1) complex with the substrate recognition subunit WSB1. Component of the ECS(SOCS3) complex with the substrate recognition component SOCS3. Component of the ECS(SOCS7) complex with the substrate recognition component SOCS7. Component of the ECS(SPSB1) complex with the substrate recognition component SPSB1. Component of the ECS(SPSB3) complex with the substrate recognition component SPSB3. Component of the ECS(SPSB2) complex with the substrate recognition component SPSB2. Component of the ECS(SPSB4) complex with the substrate recognition component SPSB4. Component of the ECS(RAB40) complex with the substrate recognition subunit RAB40A, RAB40B or RAB40C. Component of the ECS(KLHDC1) complex with the substrate recognition component KLHDC1. Component of the ECS(PCMTD1) complex with the substrate recognition subunit PCMTD1. May also form complexes containing RBX1 and ELOA or VHL; additional evidence is however required to confirm this result in vivo. Interacts (when neddylated) with ARIH2; leading to activate the E3 ligase activity of ARIH2. Interacts with ERCC6; the interaction is induced by DNA damaging agents or inhibitors of RNA polymerase II elongation. Interacts with ELOA (via the BC-box). Interacts (unneddylated form) with DCUN1D1, DCUN1D2, DCUN1D3, DCUN1D4 and DCUN1D5; these interactions promote the cullin neddylation. Neddylated; which enhances the ubiquitination activity of ECS complexes and prevents binding of the inhibitor CAND1. Deneddylated via its interaction with the COP9 signalosome (CSN).

It localises to the nucleus. It functions in the pathway protein modification; protein ubiquitination. Functionally, core component of multiple cullin-5-RING E3 ubiquitin-protein ligase complexes (ECS complexes, also named CRL5 complexes), which mediate the ubiquitination and subsequent proteasomal degradation of target proteins. Acts a scaffold protein that contributes to catalysis through positioning of the substrate and the ubiquitin-conjugating enzyme. The functional specificity of the E3 ubiquitin-protein ligase complex depends on the variable SOCS box-containing substrate recognition component. Acts as a key regulator of neuron positioning during cortex development: component of various SOCS-containing ECS complexes, such as the ECS(SOCS7) complex, that regulate reelin signaling by mediating ubiquitination and degradation of DAB1. ECS(SOCS1) seems to direct ubiquitination of JAK2. The ECS(SOCS2) complex mediates the ubiquitination and subsequent proteasomal degradation of phosphorylated EPOR and GHR. The ECS(SPSB3) complex catalyzes ubiquitination of nuclear CGAS. ECS(KLHDC1) complex is part of the DesCEND (destruction via C-end degrons) pathway and mediates ubiquitination and degradation of truncated SELENOS selenoprotein produced by failed UGA/Sec decoding, which ends with a glycine. The ECS(ASB9) complex mediates ubiquitination and degradation of CKB. As part of some ECS complex, promotes 'Lys-11'-linked ubiquitination and degradation of BTRC. As part of a multisubunit ECS complex, polyubiquitinates monoubiquitinated POLR2A. As part of the ECS(RAB40C) complex, mediates ANKRD28 ubiquitination and degradation, thereby regulating protein phosphatase 6 (PP6) complex activity and focal adhesion assembly during cell migration. As part of the ECS(RAB40A) complex, mediates RHOU 'Lys-48'-linked ubiquitination and degradation, thus inhibiting focal adhesion disassembly during cell migration. As part of the ECS(RAB40B) complex, mediates LIMA1/EPLIN and RAP2 ubiquitination, thereby regulating actin cytoskeleton dynamics and stress fiber formation during cell migration. May form a cell surface vasopressin receptor. This chain is Cullin-5, found in Mus musculus (Mouse).